A 61-amino-acid chain; its full sequence is Ferredoxin-2 (61 aa).

2 consecutive 4Fe-4S ferredoxin-type domains span residues 2 to 27 and 28 to 61; these read HRIT…SAGD and EIYI…IIKV. Residues C8, C11, C14, C18, C37, C40, C49, and C53 each contribute to the [4Fe-4S] cluster site.

Requires [4Fe-4S] cluster as cofactor.

In terms of biological role, ferredoxins are iron-sulfur proteins that transfer electrons in a wide variety of metabolic reactions. This chain is Ferredoxin-2, found in Chlorobium limicola.